Consider the following 584-residue polypeptide: uncharacterized protein (584 aa).

Disordered regions lie at residues 123–156, 209–264, and 355–479; these read LSCS…PSSP, KIVT…INGG, and STQL…ITPT. Low complexity-rich tracts occupy residues 237–260 and 366–376; these read SLSF…PKSS and SISAATTTTIT. Polar residues-rich tracts occupy residues 377 to 388 and 395 to 419; these read PHNNNSTMTTKT and DTSN…STTP. The segment covering 425–479 has biased composition (low complexity); sequence MSMTPLSSSSSSSTTPSKFINPLPSSSSKTTTTITNSKRLSTLSKPSPITPITPT.

This is an uncharacterized protein from Dictyostelium discoideum (Social amoeba).